The sequence spans 173 residues: Small ribosomal subunit protein uS5 (173 aa).

The S5 DRBM domain occupies 17–80 (WQERVIQIRR…ADGKKQLIDV (64 aa)).

The protein belongs to the universal ribosomal protein uS5 family. As to quaternary structure, part of the 30S ribosomal subunit. Contacts proteins S4 and S8.

With S4 and S12 plays an important role in translational accuracy. Its function is as follows. Located at the back of the 30S subunit body where it stabilizes the conformation of the head with respect to the body. This chain is Small ribosomal subunit protein uS5, found in Crocosphaera subtropica (strain ATCC 51142 / BH68) (Cyanothece sp. (strain ATCC 51142)).